Here is a 479-residue protein sequence, read N- to C-terminus: Anaerobic nitric oxide reductase flavorubredoxin (479 aa).

The segment at 30–210 (LRGSSYNSYL…PFSRLVTPKI (181 aa)) is zinc metallo-hydrolase. Residues His-79, Glu-81, Asp-83, His-147, Asp-166, and His-227 each coordinate Fe cation. Residues 254-393 (ITIFYDTMSN…LCREHGREIA (140 aa)) form the Flavodoxin-like domain. FMN-binding positions include 260–264 (TMSNN) and 342–369 (AFGS…EMSL). The Rubredoxin-like domain maps to 423-474 (GPRMQCSVCQWIYDPAKGEPMQDVAPGTPWSEVPDNFLCPECSLGKDVFDEL). The Fe cation site is built by Cys-428, Cys-431, Cys-461, and Cys-464.

It in the N-terminal section; belongs to the zinc metallo-hydrolase group 3 family. In terms of assembly, homotetramer. Fe cation is required as a cofactor. FMN serves as cofactor.

It localises to the cytoplasm. Its pathway is nitrogen metabolism; nitric oxide reduction. Its function is as follows. Anaerobic nitric oxide reductase; uses NADH to detoxify nitric oxide (NO), protecting several 4Fe-4S NO-sensitive enzymes. Has at least 2 reductase partners, only one of which (NorW, flavorubredoxin reductase) has been identified. NO probably binds to the di-iron center; electrons enter from the NorW at rubredoxin and are transferred sequentially to the FMN center and the di-iron center. Also able to function as an aerobic oxygen reductase. In Shigella flexneri serotype 5b (strain 8401), this protein is Anaerobic nitric oxide reductase flavorubredoxin.